We begin with the raw amino-acid sequence, 386 residues long: MIKILGIESSCDDTAVSIITENREILSNIIISQNTEHAVFGGVVPEIAARSHLSNLDKALTNVLKESNTKLIEISAIAATSGPGLIGGVIVGSMFARSLSSTLKKPFIAINHLEGHALTARLTDNIPYPYLLLLASGGHCQFVAVLGLGKYKILGSTIDDAVGETFDKVAKMLNLAFPGGPEIEQKAKLGDPHKYKFPKPIINSGNCNMSFSGLKTAVRTLIMNLQEINYNECNHLESVRQDEVQEEFAQRTKVHEHRRKLQNSLVSSFLNDSVINDIAASFQFTIGEILSSKVQDAIRAYEQITNNFDKKNIIIAGGVAANKYLQEILSNCAKTYGYQLIYPPIHLCTDNAAMIAYAGLERYNNKLFTPLNFCPKARWSLEDISK.

The Fe cation site is built by histidine 112 and histidine 116. Residues 134–138, aspartate 167, glycine 180, and asparagine 322 each bind substrate; that span reads LASGG. Aspartate 350 contributes to the Fe cation binding site.

The protein belongs to the KAE1 / TsaD family. It depends on Fe(2+) as a cofactor.

The protein localises to the cytoplasm. The catalysed reaction is L-threonylcarbamoyladenylate + adenosine(37) in tRNA = N(6)-L-threonylcarbamoyladenosine(37) in tRNA + AMP + H(+). In terms of biological role, required for the formation of a threonylcarbamoyl group on adenosine at position 37 (t(6)A37) in tRNAs that read codons beginning with adenine. Is involved in the transfer of the threonylcarbamoyl moiety of threonylcarbamoyl-AMP (TC-AMP) to the N6 group of A37, together with TsaE and TsaB. TsaD likely plays a direct catalytic role in this reaction. The polypeptide is tRNA N6-adenosine threonylcarbamoyltransferase (Rickettsia akari (strain Hartford)).